The sequence spans 897 residues: uncharacterized protein (897 aa).

Disordered stretches follow at residues 25–89 (RLQD…TRKR) and 106–168 (PTRL…TPPS). Low complexity-rich tracts occupy residues 32–44 (SSSP…SSSS), 57–68 (SLQNSQSSSYSL), and 106–142 (PTRL…SSVS). The 184-residue stretch at 263-446 (SMEQSSKCGG…YSLLKFLRIK (184 aa)) folds into the Helicase ATP-binding domain. Position 276-283 (276-283 (DDMGLGKT)) interacts with ATP. A DEAH box motif is present at residues 397–400 (DEAH). The RING-type zinc-finger motif lies at 606–655 (CSVCLDPCLAPVFIIPCGHFTCQECMSMLVGQKYGSSSTSTIIAKCPMCR). Positions 727 to 890 (QARQTILDII…LSRLDKEELL (164 aa)) constitute a Helicase C-terminal domain.

Belongs to the SNF2/RAD54 helicase family.

The protein localises to the cytoplasm. It localises to the nucleus. This is an uncharacterized protein from Schizosaccharomyces pombe (strain 972 / ATCC 24843) (Fission yeast).